The primary structure comprises 397 residues: Elongation factor Tu (397 aa).

Positions 10–206 constitute a tr-type G domain; sequence KPHVNIGTIG…AVDTSIPQPE (197 aa). The G1 stretch occupies residues 19-26; the sequence is GHIDHGKT. 19–26 contributes to the GTP binding site; that stretch reads GHIDHGKT. Thr-26 is a Mg(2+) binding site. Residues 62–66 are G2; sequence GITIS. Positions 83 to 86 are G3; the sequence is DCPG. Residues 83-87 and 138-141 each bind GTP; these read DCPGH and NKSD. The tract at residues 138 to 141 is G4; it reads NKSD. Residues 176-178 form a G5 region; the sequence is SAL.

Belongs to the TRAFAC class translation factor GTPase superfamily. Classic translation factor GTPase family. EF-Tu/EF-1A subfamily. Monomer.

The protein resides in the cytoplasm. The catalysed reaction is GTP + H2O = GDP + phosphate + H(+). Functionally, GTP hydrolase that promotes the GTP-dependent binding of aminoacyl-tRNA to the A-site of ribosomes during protein biosynthesis. This is Elongation factor Tu from Salinispora tropica (strain ATCC BAA-916 / DSM 44818 / JCM 13857 / NBRC 105044 / CNB-440).